The chain runs to 647 residues: Threonine--tRNA ligase (647 aa).

In terms of domain architecture, TGS spans 1–61 (MINITFPDGA…TEDGSIEIVT (61 aa)). The tract at residues 242–540 (DHRKLGKELD…LIENYKGAFP (299 aa)) is catalytic. Residues Cys336, His387, and His517 each coordinate Zn(2+).

It belongs to the class-II aminoacyl-tRNA synthetase family. As to quaternary structure, homodimer. The cofactor is Zn(2+).

Its subcellular location is the cytoplasm. It carries out the reaction tRNA(Thr) + L-threonine + ATP = L-threonyl-tRNA(Thr) + AMP + diphosphate + H(+). Its function is as follows. Catalyzes the attachment of threonine to tRNA(Thr) in a two-step reaction: L-threonine is first activated by ATP to form Thr-AMP and then transferred to the acceptor end of tRNA(Thr). Also edits incorrectly charged L-seryl-tRNA(Thr). In Streptococcus pneumoniae serotype 19F (strain G54), this protein is Threonine--tRNA ligase.